We begin with the raw amino-acid sequence, 861 residues long: Bifunctional uridylyltransferase/uridylyl-removing enzyme (861 aa).

Residues 1–322 (MHTAAAATPA…FPTELGITRT (322 aa)) form a uridylyltransferase region. Positions 323 to 679 (INGRFVERQG…ARISPVGEGL (357 aa)) are uridylyl-removing. The 117-residue stretch at 441 to 557 (VDQHILMVVR…RHFADQVGSE (117 aa)) folds into the HD domain. 2 consecutive ACT domains span residues 680 to 763 (QVAV…AEPP) and 792 to 861 (LLSL…ALAI).

It belongs to the GlnD family. Mg(2+) serves as cofactor.

The enzyme catalyses [protein-PII]-L-tyrosine + UTP = [protein-PII]-uridylyl-L-tyrosine + diphosphate. The catalysed reaction is [protein-PII]-uridylyl-L-tyrosine + H2O = [protein-PII]-L-tyrosine + UMP + H(+). Uridylyltransferase (UTase) activity is inhibited by glutamine, while glutamine activates uridylyl-removing (UR) activity. In terms of biological role, modifies, by uridylylation and deuridylylation, the PII regulatory proteins (GlnB and homologs), in response to the nitrogen status of the cell that GlnD senses through the glutamine level. Under low glutamine levels, catalyzes the conversion of the PII proteins and UTP to PII-UMP and PPi, while under higher glutamine levels, GlnD hydrolyzes PII-UMP to PII and UMP (deuridylylation). Thus, controls uridylylation state and activity of the PII proteins, and plays an important role in the regulation of nitrogen assimilation and metabolism. This chain is Bifunctional uridylyltransferase/uridylyl-removing enzyme, found in Ralstonia nicotianae (strain ATCC BAA-1114 / GMI1000) (Ralstonia solanacearum).